We begin with the raw amino-acid sequence, 130 residues long: Large-conductance mechanosensitive channel (130 aa).

2 helical membrane-spanning segments follow: residues 14–34 (IIDL…VTSF) and 73–93 (FVDF…LVKF).

It belongs to the MscL family. As to quaternary structure, homopentamer.

The protein resides in the cell membrane. Channel that opens in response to stretch forces in the membrane lipid bilayer. May participate in the regulation of osmotic pressure changes within the cell. The protein is Large-conductance mechanosensitive channel of Oceanobacillus iheyensis (strain DSM 14371 / CIP 107618 / JCM 11309 / KCTC 3954 / HTE831).